The chain runs to 679 residues: Glycine--tRNA ligase beta subunit (679 aa).

Belongs to the class-II aminoacyl-tRNA synthetase family. In terms of assembly, tetramer of two alpha and two beta subunits.

It is found in the cytoplasm. The catalysed reaction is tRNA(Gly) + glycine + ATP = glycyl-tRNA(Gly) + AMP + diphosphate. The protein is Glycine--tRNA ligase beta subunit of Streptococcus pyogenes serotype M49 (strain NZ131).